We begin with the raw amino-acid sequence, 243 residues long: UPF0758 protein Ava_0172 (243 aa).

The MPN domain occupies 113 to 235; the sequence is PIDSPVAAVA…HQSLREVTTL (123 aa). Zn(2+)-binding residues include His-184, His-186, and Asp-197. A JAMM motif motif is present at residues 184-197; sequence HNHPSGNVEPSPED.

The protein belongs to the UPF0758 family.

The protein is UPF0758 protein Ava_0172 of Trichormus variabilis (strain ATCC 29413 / PCC 7937) (Anabaena variabilis).